We begin with the raw amino-acid sequence, 360 residues long: MVQKLSRRLFLSIGTAFTVVVGSQLLSSCGQSPDAPIADTPGEQQEINLYSSRHYNTDNELYAKFTAETGIKVNLIEGKADELLERIKSEGANSPADVLLTVDLARLWRAEEDGIFQPVQSEILETNVPEYLRSPDGMWFGFTKRARVIMYNKGKVKPEELSTYEELADPKWKGRVIIRSSSNEYNQSLVASLVVADGEESTLAWAKGFVSNFAREPQGNDTAQIEAVSSGEADLTLANTYYMGRLLESEDPAQKAIAENVGVFFPNQEGRGTHVNVSGVGVVKTAPNREGAVKFIEFLVSEPAQAFLAQNNYEYPVLAGVPLNKSVASFGEFKSDTTSLDKLGPALAPATKIMNEAGWK.

The N-terminal stretch at 1–28 (MVQKLSRRLFLSIGTAFTVVVGSQLLSS) is a signal peptide. A lipid anchor (N-palmitoyl cysteine) is attached at cysteine 29. A lipid anchor (S-diacylglycerol cysteine) is attached at cysteine 29. Positions 54, 55, 185, 241, and 242 each coordinate Fe cation.

Belongs to the bacterial solute-binding protein 1 family.

The protein localises to the cellular thylakoid membrane. It localises to the cell membrane. In terms of biological role, plays an important role in protecting the acceptor side of photosystem II (PSII) against oxidative damage, especially under iron-limiting growth conditions. The differing subcellular locations of futA1 (predominantly thylakoid lumen) and futA2 (predominantly periplasmic) suggest they may fulfill different roles. Functionally, a major iron-binding protein involved in Fe(3+) uptake, probably part of a periplasmic ABC transporter complex futA1A2BC (TC 3.A.1.10.2) involved in Fe(3+) ion import (ferric iron). This protein and futA2 (slr0531) may be subunit proteins that have redundant or overlapping substrate-binding functions. This chain is Iron uptake protein A1 (futA1), found in Synechocystis sp. (strain ATCC 27184 / PCC 6803 / Kazusa).